The primary structure comprises 219 residues: Orotate phosphoribosyltransferase (219 aa).

Lysine 26 provides a ligand contact to 5-phospho-alpha-D-ribose 1-diphosphate. 34–35 (FF) contacts orotate. Residues 72–73 (YK), arginine 98, lysine 99, lysine 102, histidine 104, and 124–132 (DDVITAGTA) each bind 5-phospho-alpha-D-ribose 1-diphosphate. 2 residues coordinate orotate: threonine 128 and arginine 156.

It belongs to the purine/pyrimidine phosphoribosyltransferase family. PyrE subfamily. As to quaternary structure, homodimer. The cofactor is Mg(2+).

The catalysed reaction is orotidine 5'-phosphate + diphosphate = orotate + 5-phospho-alpha-D-ribose 1-diphosphate. It participates in pyrimidine metabolism; UMP biosynthesis via de novo pathway; UMP from orotate: step 1/2. Functionally, catalyzes the transfer of a ribosyl phosphate group from 5-phosphoribose 1-diphosphate to orotate, leading to the formation of orotidine monophosphate (OMP). In Xylella fastidiosa (strain 9a5c), this protein is Orotate phosphoribosyltransferase.